Here is a 265-residue protein sequence, read N- to C-terminus: GTP cyclohydrolase 1 type 2 homolog (265 aa).

Residues H65, D103, H225, and E228 each contribute to the a divalent metal cation site.

It belongs to the GTP cyclohydrolase I type 2/NIF3 family. In terms of assembly, homohexamer.

This is GTP cyclohydrolase 1 type 2 homolog from Streptococcus pneumoniae serotype 4 (strain ATCC BAA-334 / TIGR4).